We begin with the raw amino-acid sequence, 330 residues long: 1,8-cineole synthase (330 aa).

A Mg(2+)-binding site is contributed by Asp-81. Residues Asp-81–Asp-85 carry the DDXXD motif motif. Residue Arg-174 coordinates substrate. Mg(2+) is bound by residues Asn-220 and Ser-224. The NXXXSXXXE motif motif lies at Asn-220 to Glu-228. Lys-227 contributes to the substrate binding site. Position 228 (Glu-228) interacts with Mg(2+). Substrate is bound at residue Arg-314–Tyr-315.

This sequence belongs to the terpene synthase family. Homodimer. The cofactor is Mg(2+).

It catalyses the reaction (2E)-geranyl diphosphate + H2O = 1,8-cineole + diphosphate. It carries out the reaction neryl diphosphate + H2O = 1,8-cineole + diphosphate. Functionally, in vitro, catalyzes the formation of 1,8-cineole from geranyl diphosphate (GPP). Can also accept neryl diphosphate (NPP) as substrate to produce 1,8-cineole. The chain is 1,8-cineole synthase from Streptomyces clavuligerus.